A 260-amino-acid polypeptide reads, in one-letter code: MVLIRVLANLLILQLSYAQKSSELVIGGVECDINEHRFLVALYELTSMTFLCGGTLINQEWVVTAAHCDRLQLYLYIGMHDKYVKFDDEQGREPIEKYFYNCSNNLTTRDKDIMLIRLDRPVDNSTHIAPLSLPSRPPSVGSVCRVMGWGAISPSRDVLPDVPHCVNINLVNNAECRRAYPRLPATSRTLCAGVMQGGIDSCNRDSGGPLICDGQFQGVVNWGGNPCAQPNMPALYTKVYDYNDWIRSITAGNTTAACPP.

An N-terminal signal peptide occupies residues 1–18 (MVLIRVLANLLILQLSYA). Residues 19-24 (QKSSEL) constitute a propeptide that is removed on maturation. A Peptidase S1 domain is found at 25–251 (VIGGVECDIN…YNDWIRSITA (227 aa)). Disulfide bonds link C31–C165, C52–C68, C102–C258, C144–C212, C176–C191, and C202–C227. The active-site Charge relay system is the H67. 2 N-linked (GlcNAc...) asparagine glycosylation sites follow: N101 and N105. D112 serves as the catalytic Charge relay system. N-linked (GlcNAc...) asparagine glycosylation is present at N124. S206 (charge relay system) is an active-site residue. N-linked (GlcNAc...) asparagine glycosylation is present at N253.

It belongs to the peptidase S1 family. Snake venom subfamily. Monomer. Post-translationally, N-glycosylated. In terms of tissue distribution, expressed by the venom gland.

The protein resides in the secreted. Functionally, thrombin-like snake venom serine protease that coagulates human fibrinogen by hydrolysis of the alpha chains (FGA). The protein is Thrombin-like enzyme acutobin of Deinagkistrodon acutus (Hundred-pace snake).